Reading from the N-terminus, the 245-residue chain is Ribonuclease PH (245 aa).

Residues arginine 86 and 124–126 (GTR) each bind phosphate.

The protein belongs to the RNase PH family. As to quaternary structure, homohexameric ring arranged as a trimer of dimers.

The enzyme catalyses tRNA(n+1) + phosphate = tRNA(n) + a ribonucleoside 5'-diphosphate. Its function is as follows. Phosphorolytic 3'-5' exoribonuclease that plays an important role in tRNA 3'-end maturation. Removes nucleotide residues following the 3'-CCA terminus of tRNAs; can also add nucleotides to the ends of RNA molecules by using nucleoside diphosphates as substrates, but this may not be physiologically important. Probably plays a role in initiation of 16S rRNA degradation (leading to ribosome degradation) during starvation. In Bacillus mycoides (strain KBAB4) (Bacillus weihenstephanensis), this protein is Ribonuclease PH.